Reading from the N-terminus, the 266-residue chain is 3-methyl-2-oxobutanoate hydroxymethyltransferase (266 aa).

D43 and D82 together coordinate Mg(2+). Residues D43–S44, D82, and K110 each bind 3-methyl-2-oxobutanoate. Residue E112 participates in Mg(2+) binding. The Proton acceptor role is filled by E179.

Belongs to the PanB family. Homodecamer; pentamer of dimers. Mg(2+) is required as a cofactor.

Its subcellular location is the cytoplasm. The catalysed reaction is 3-methyl-2-oxobutanoate + (6R)-5,10-methylene-5,6,7,8-tetrahydrofolate + H2O = 2-dehydropantoate + (6S)-5,6,7,8-tetrahydrofolate. The protein operates within cofactor biosynthesis; (R)-pantothenate biosynthesis; (R)-pantoate from 3-methyl-2-oxobutanoate: step 1/2. Its function is as follows. Catalyzes the reversible reaction in which hydroxymethyl group from 5,10-methylenetetrahydrofolate is transferred onto alpha-ketoisovalerate to form ketopantoate. The polypeptide is 3-methyl-2-oxobutanoate hydroxymethyltransferase (Psychrobacter arcticus (strain DSM 17307 / VKM B-2377 / 273-4)).